The chain runs to 486 residues: Membrane-bound lytic murein transglycosylase F (486 aa).

An N-terminal signal peptide occupies residues 1 to 29; it reads MFSPTALRPRYAKWLIATGLFLMLSGCVD. The tract at residues 30 to 267 is non-LT domain; that stretch reads KPNTLERVKE…RLKDRYYGHV (238 aa). Residues 268-486 form an LT domain region; that stretch reads DVLGYMGATT…SKPAQEPAPL (219 aa). E314 is an active-site residue.

In the N-terminal section; belongs to the bacterial solute-binding protein 3 family. The protein in the C-terminal section; belongs to the transglycosylase Slt family.

It is found in the cell outer membrane. The enzyme catalyses Exolytic cleavage of the (1-&gt;4)-beta-glycosidic linkage between N-acetylmuramic acid (MurNAc) and N-acetylglucosamine (GlcNAc) residues in peptidoglycan, from either the reducing or the non-reducing ends of the peptidoglycan chains, with concomitant formation of a 1,6-anhydrobond in the MurNAc residue.. Murein-degrading enzyme that degrades murein glycan strands and insoluble, high-molecular weight murein sacculi, with the concomitant formation of a 1,6-anhydromuramoyl product. Lytic transglycosylases (LTs) play an integral role in the metabolism of the peptidoglycan (PG) sacculus. Their lytic action creates space within the PG sacculus to allow for its expansion as well as for the insertion of various structures such as secretion systems and flagella. This Pseudomonas fluorescens (strain Pf0-1) protein is Membrane-bound lytic murein transglycosylase F.